Here is a 232-residue protein sequence, read N- to C-terminus: Small ribosomal subunit protein uS3 (232 aa).

In terms of domain architecture, KH type-2 spans 39–107 (IRKFLKTKLY…DIAINIKEER (69 aa)). Over residues 213-222 (QADKNEDTSP) the composition is skewed to basic and acidic residues. A disordered region spans residues 213-232 (QADKNEDTSPKKPRRARRGK). Residues 223-232 (KKPRRARRGK) are compositionally biased toward basic residues.

This sequence belongs to the universal ribosomal protein uS3 family. As to quaternary structure, part of the 30S ribosomal subunit. Forms a tight complex with proteins S10 and S14.

Binds the lower part of the 30S subunit head. Binds mRNA in the 70S ribosome, positioning it for translation. In Campylobacter fetus subsp. fetus (strain 82-40), this protein is Small ribosomal subunit protein uS3.